The chain runs to 214 residues: MIRRGLLSVTAALVLLSVSCSAQETMGCADRTAINDFNATLYMGKWYEYAKMGSMPYEEGGVCVTAEYSMSSNNITVVNSMKDNTTHEVNTTTGWAEFASELHTDGKLSVHFPNSPSVGNYWILSTDYDNYSIVWSCVKRPDSAASTEISWILLRSRNSSNMTLERVEDELKNLQLDLNKYTKTEQSAKYCAGAEHVVGAMLSVAIASLFALLH.

An N-terminal signal peptide occupies residues 1 to 21 (MIRRGLLSVTAALVLLSVSCS). Residues Asn38, Asn74, Asn84, Asn90, Asn130, Asn158, and Asn161 are each glycosylated (N-linked (GlcNAc...) asparagine). Ala192 carries the GPI-anchor amidated alanine lipid modification. Residues 193 to 214 (GAEHVVGAMLSVAIASLFALLH) constitute a propeptide, removed in mature form.

The protein belongs to the calycin superfamily. Lipocalin family. N-glycosylated. Post-translationally, contains disulfide bonds. As to expression, expressed by a subset of neuroblasts, ganglion mother cells and neurons of the CNS; by all sensory neurons of the PNS.

Its subcellular location is the cell membrane. Functionally, putative role in axonal outgrowth and guidance, required for the navigation of identified commissural neurons. Could be a receptor the midline morphogen. The protein is Lazarillo protein of Schistocerca americana (American grasshopper).